Consider the following 210-residue polypeptide: Large ribosomal subunit protein uL4 (210 aa).

The segment covering 41–51 (ANARQGTQSTK) has biased composition (polar residues). Disordered stretches follow at residues 41 to 60 (ANAR…QGSS) and 67 to 98 (KGTG…DFSK).

Belongs to the universal ribosomal protein uL4 family. In terms of assembly, part of the 50S ribosomal subunit.

Its function is as follows. One of the primary rRNA binding proteins, this protein initially binds near the 5'-end of the 23S rRNA. It is important during the early stages of 50S assembly. It makes multiple contacts with different domains of the 23S rRNA in the assembled 50S subunit and ribosome. Forms part of the polypeptide exit tunnel. The polypeptide is Large ribosomal subunit protein uL4 (Dehalococcoides mccartyi (strain ATCC BAA-2266 / KCTC 15142 / 195) (Dehalococcoides ethenogenes (strain 195))).